Consider the following 229-residue polypeptide: uncharacterized protein (229 aa).

A coiled-coil region spans residues 66-94 (GHEKLQIQSALRDIESAENQARVQQCNAK).

This is an uncharacterized protein from Ostreid herpesvirus 1 (isolate France) (OsHV-1).